Consider the following 281-residue polypeptide: Protein-S-isoprenylcysteine O-methyltransferase (281 aa).

Residues 1–2 (ML) are Cytoplasmic-facing. The chain crosses the membrane as a helical span at residues 3-29 (SPAGKISLQSFTGSSLVFFVICMFNHY). Topologically, residues 30-35 (YGITNL) are lumenal. A helical transmembrane segment spans residues 36–53 (VVNTLIVFFYAVNVYFFL). Topologically, residues 54–58 (KFFYN) are cytoplasmic. The chain crosses the membrane as a helical span at residues 59 to 85 (EFAFAIAIRAAFLGLVLVLGLYIKLVA). Over 86–88 (PPN) the chain is Lumenal. The helical transmembrane segment at 89-113 (IQIFGGYMSVMALFHYSEFLAIAIV) threads the bilayer. Topologically, residues 114–118 (QPKQV) are cytoplasmic. A helical transmembrane segment spans residues 119 to 149 (STDSFVINHSPQYTIAAVSSWVEFFIETYFF). The Lumenal portion of the chain corresponds to 150–155 (PGLKEI). A helical membrane pass occupies residues 156–181 (HWLSNIGLCVCILGEVLRKTAILTAG). The Cytoplasmic portion of the chain corresponds to 182-208 (SNFNHLVQCEKSSDHVLVTHGVYAWFR). Residues Gln-189, 196–199 (HVLV), Tyr-204, and 209–212 (HPSY) contribute to the S-adenosyl-L-methionine site. A helical membrane pass occupies residues 209–226 (HPSYVGWFYWSIGTQIIL). At 227–229 (INP) the chain is on the lumenal side. A helical transmembrane segment spans residues 230-243 (LCIPAYTLASWMFF). At 244-281 (KERIYIEESMLLSFFGQQYCDYQQQVGTGIPFIEGYKI) the chain is on the cytoplasmic side. Position 246 (Arg-246) interacts with substrate. S-adenosyl-L-methionine is bound at residue Glu-250.

This sequence belongs to the class VI-like SAM-binding methyltransferase superfamily. Isoprenylcysteine carboxyl methyltransferase family.

It localises to the endoplasmic reticulum membrane. It carries out the reaction [protein]-C-terminal S-[(2E,6E)-farnesyl]-L-cysteine + S-adenosyl-L-methionine = [protein]-C-terminal S-[(2E,6E)-farnesyl]-L-cysteine methyl ester + S-adenosyl-L-homocysteine. Catalyzes the post-translational methylation of isoprenylated C-terminal cysteine residues. The sequence is that of Protein-S-isoprenylcysteine O-methyltransferase from Tribolium castaneum (Red flour beetle).